The sequence spans 237 residues: Ribosomal RNA small subunit methyltransferase G (237 aa).

S-adenosyl-L-methionine is bound by residues G78, F83, 129 to 130 (AE), and R148. The tract at residues 218–237 (KKETPNKFPRKAGMPNKRPL) is disordered.

It belongs to the methyltransferase superfamily. RNA methyltransferase RsmG family.

It is found in the cytoplasm. Specifically methylates the N7 position of a guanine in 16S rRNA. This Streptococcus suis (strain 98HAH33) protein is Ribosomal RNA small subunit methyltransferase G.